Here is a 246-residue protein sequence, read N- to C-terminus: Auxin-responsive protein IAA25 (246 aa).

Residues 1-22 (MKSSSVAPRLKQERQDDCKFQE) form a disordered region. Over residues 10–22 (LKQERQDDCKFQE) the composition is skewed to basic and acidic residues. The short motif at 28-32 (LELRL) is the EAR-like (transcriptional repression) element. The 96-residue stretch at 143 to 238 (TMFVKVNLEG…SVKRLYIAQD (96 aa)) folds into the PB1 domain.

It belongs to the Aux/IAA family. Homodimers and heterodimers. In terms of tissue distribution, highly expressed in flowers. Expressed in roots and seedlings.

It localises to the nucleus. Its function is as follows. Aux/IAA proteins are short-lived transcriptional factors that function as repressors of early auxin response genes at low auxin concentrations. This chain is Auxin-responsive protein IAA25 (IAA25), found in Oryza sativa subsp. japonica (Rice).